The chain runs to 227 residues: Cytochrome c oxidase subunit 2 (227 aa).

Over 1–14 the chain is Mitochondrial intermembrane; sequence MAYPVQLGFQDAAS. Residues 15–45 traverse the membrane as a helical segment; the sequence is PIMEELLYFHDHTLMIMFLISSLVLYIISLM. Residues 46 to 59 are Mitochondrial matrix-facing; sequence LTTELMHTNTMDAQ. The helical transmembrane segment at 60–87 threads the bilayer; that stretch reads EVETVWTILPAAILILIALPSLRILYMM. At 88-227 the chain is on the mitochondrial intermembrane side; it reads DEITTPSLTL…HFEEWLLSML (140 aa). The Cu cation site is built by His161, Cys196, Glu198, Cys200, His204, and Met207. Glu198 contacts Mg(2+).

It belongs to the cytochrome c oxidase subunit 2 family. Component of the cytochrome c oxidase (complex IV, CIV), a multisubunit enzyme composed of 14 subunits. The complex is composed of a catalytic core of 3 subunits MT-CO1, MT-CO2 and MT-CO3, encoded in the mitochondrial DNA, and 11 supernumerary subunits COX4I, COX5A, COX5B, COX6A, COX6B, COX6C, COX7A, COX7B, COX7C, COX8 and NDUFA4, which are encoded in the nuclear genome. The complex exists as a monomer or a dimer and forms supercomplexes (SCs) in the inner mitochondrial membrane with NADH-ubiquinone oxidoreductase (complex I, CI) and ubiquinol-cytochrome c oxidoreductase (cytochrome b-c1 complex, complex III, CIII), resulting in different assemblies (supercomplex SCI(1)III(2)IV(1) and megacomplex MCI(2)III(2)IV(2)). Found in a complex with TMEM177, COA6, COX18, COX20, SCO1 and SCO2. Interacts with TMEM177 in a COX20-dependent manner. Interacts with COX20. Interacts with COX16. Requires Cu cation as cofactor.

It is found in the mitochondrion inner membrane. The catalysed reaction is 4 Fe(II)-[cytochrome c] + O2 + 8 H(+)(in) = 4 Fe(III)-[cytochrome c] + 2 H2O + 4 H(+)(out). Its function is as follows. Component of the cytochrome c oxidase, the last enzyme in the mitochondrial electron transport chain which drives oxidative phosphorylation. The respiratory chain contains 3 multisubunit complexes succinate dehydrogenase (complex II, CII), ubiquinol-cytochrome c oxidoreductase (cytochrome b-c1 complex, complex III, CIII) and cytochrome c oxidase (complex IV, CIV), that cooperate to transfer electrons derived from NADH and succinate to molecular oxygen, creating an electrochemical gradient over the inner membrane that drives transmembrane transport and the ATP synthase. Cytochrome c oxidase is the component of the respiratory chain that catalyzes the reduction of oxygen to water. Electrons originating from reduced cytochrome c in the intermembrane space (IMS) are transferred via the dinuclear copper A center (CU(A)) of subunit 2 and heme A of subunit 1 to the active site in subunit 1, a binuclear center (BNC) formed by heme A3 and copper B (CU(B)). The BNC reduces molecular oxygen to 2 water molecules using 4 electrons from cytochrome c in the IMS and 4 protons from the mitochondrial matrix. The protein is Cytochrome c oxidase subunit 2 (MT-CO2) of Lemur catta (Ring-tailed lemur).